Here is a 154-residue protein sequence, read N- to C-terminus: Large ribosomal subunit protein uL13 (154 aa).

It belongs to the universal ribosomal protein uL13 family. As to quaternary structure, part of the 50S ribosomal subunit.

Functionally, this protein is one of the early assembly proteins of the 50S ribosomal subunit, although it is not seen to bind rRNA by itself. It is important during the early stages of 50S assembly. The protein is Large ribosomal subunit protein uL13 of Mesorhizobium japonicum (strain LMG 29417 / CECT 9101 / MAFF 303099) (Mesorhizobium loti (strain MAFF 303099)).